Consider the following 334-residue polypeptide: Mevalonate kinase (334 aa).

110–120 lines the ATP pocket; the sequence is PVGAGLGSSAA. The active-site Proton acceptor is the D161.

It belongs to the GHMP kinase family. Mevalonate kinase subfamily. As to quaternary structure, homodimer. Mg(2+) is required as a cofactor.

The protein localises to the cytoplasm. The enzyme catalyses (R)-mevalonate + ATP = (R)-5-phosphomevalonate + ADP + H(+). Its pathway is isoprenoid biosynthesis; isopentenyl diphosphate biosynthesis via mevalonate pathway; isopentenyl diphosphate from (R)-mevalonate: step 1/3. In terms of biological role, catalyzes the phosphorylation of (R)-mevalonate (MVA) to (R)-mevalonate 5-phosphate (MVAP). Functions in the mevalonate (MVA) pathway leading to isopentenyl diphosphate (IPP), a key precursor for the biosynthesis of isoprenoid compounds such as archaeal membrane lipids. The chain is Mevalonate kinase from Thermococcus onnurineus (strain NA1).